The following is a 359-amino-acid chain: N-acetylneuraminate-9-phosphate synthase (359 aa).

Residues Lys61, Lys74, and Lys79 each carry the N6-acetyllysine modification. The residue at position 275 (Ser275) is a Phosphoserine. Lys290 is modified (N6-acetyllysine). Residues 294–353 (SVVAKVKIPEGTILTMDMLTVKVGEPKGYPPEDIFNLVGKKVLVTVEEDDTIMEELVDNH) enclose the AFP-like domain.

Ubiquitous.

It carries out the reaction aldehydo-N-acetyl-D-mannosamine 6-phosphate + phosphoenolpyruvate + H2O = N-acetylneuraminate 9-phosphate + phosphate. The catalysed reaction is aldehydo-D-mannose 6-phosphate + phosphoenolpyruvate + H2O = 3-deoxy-D-glycero-beta-D-galacto-non-2-ulopyranosonate 9-phosphate + phosphate. Catalyzes the condensation of phosphoenolpyruvate (PEP) and N-acetylmannosamine 6-phosphate (ManNAc-6-P) to synthesize N-acetylneuraminate-9-phosphate (Neu5Ac-9-P). Also catalyzes the condensation of PEP and D-mannose 6-phosphate (Man-6-P) to produce 3-deoxy-D-glycero-beta-D-galacto-non-2-ulopyranosonate 9-phosphate (KDN-9-P). Neu5Ac-9-P and KDN-9-P are the phosphorylated forms of sialic acids N-acetylneuraminic acid (Neu5Ac) and deaminoneuraminic acid (KDN), respectively. Required for brain and skeletal development. The chain is N-acetylneuraminate-9-phosphate synthase from Homo sapiens (Human).